Reading from the N-terminus, the 398-residue chain is Inner membrane protein YjgN (398 aa).

The Cytoplasmic segment spans residues 1–24; sequence MAQVINEMDVPSHSFVFHGTGERY. A helical transmembrane segment spans residues 25–45; that stretch reads FLICVVNVLLTIITLGIYLPW. Residues 46 to 73 lie on the Periplasmic side of the membrane; it reads ALMKCKRYLYANMEVNGQRFSYGITGGN. The chain crosses the membrane as a helical span at residues 74–94; the sequence is VFFSCLVFVFFYFAILMTVSA. Position 95 (Asp-95) is a topological domain, cytoplasmic. Residues 96–116 traverse the membrane as a helical segment; the sequence is MPLIGCVLTLSLLVLLIFMAA. Residues 117–142 are Periplasmic-facing; sequence KGLRYQALMTSLNGVRFSFNCSMKGV. The helical transmembrane segment at 143–163 threads the bilayer; that stretch reads WWVTFFLPILMAIGMGTVFFI. Residues 164-175 lie on the Cytoplasmic side of the membrane; sequence STKMLHANSSSS. The helical transmembrane segment at 176 to 196 threads the bilayer; that stretch reads VIVSVVLMAIVGIVSIGIFNG. Residues 197–228 are Periplasmic-facing; sequence TLYSLVMSFLWSNTSFGIHRFKVKLDTAYCIK. The helical transmembrane segment at 229 to 249 threads the bilayer; the sequence is YAILAFLALLPFLAVAGYIIF. Residues 250-278 lie on the Cytoplasmic side of the membrane; it reads DQILNAYDSSVYANDDIENLQQFMEMQRK. The chain crosses the membrane as a helical span at residues 279 to 299; that stretch reads MIIAQLIYYFGIAVSTSYLTV. The Periplasmic segment spans residues 300 to 333; it reads SLRNHFMSNLSLNDGRIRFRSTLTYHGMLYRMCA. A helical transmembrane segment spans residues 334 to 354; the sequence is LVVISGITGGLAYPLLKIWMI. Residues 355–398 are Cytoplasmic-facing; that stretch reads DWQAKNTYLLGDLDDLPLINKEEQPDKGFLASISRGIMPSLPFL.

Its subcellular location is the cell inner membrane. This Escherichia coli O157:H7 protein is Inner membrane protein YjgN (yjgN).